We begin with the raw amino-acid sequence, 185 residues long: Ribosome-recycling factor (185 aa).

The disordered stretch occupies residues 141–161 (KQEKDKKISEDDLKRAEKEVQ).

The protein belongs to the RRF family.

It localises to the cytoplasm. In terms of biological role, responsible for the release of ribosomes from messenger RNA at the termination of protein biosynthesis. May increase the efficiency of translation by recycling ribosomes from one round of translation to another. The chain is Ribosome-recycling factor from Geotalea uraniireducens (strain Rf4) (Geobacter uraniireducens).